Consider the following 321-residue polypeptide: D-alanine--D-alanine ligase (321 aa).

The ATP-grasp domain maps to 103–303 (KKILTPENIP…YVALCRMIVE (201 aa)). 129-186 (PLPRPYVLKPVNEGSSVGVAIIDESFNDGQPIRKDQIDPWKNFKTLLAEPFIKGRELT) is an ATP binding site. 3 residues coordinate Mg(2+): aspartate 254, glutamate 270, and asparagine 272.

This sequence belongs to the D-alanine--D-alanine ligase family. It depends on Mg(2+) as a cofactor. Mn(2+) serves as cofactor.

It is found in the cytoplasm. The catalysed reaction is 2 D-alanine + ATP = D-alanyl-D-alanine + ADP + phosphate + H(+). Its pathway is cell wall biogenesis; peptidoglycan biosynthesis. Its function is as follows. Cell wall formation. In Zymomonas mobilis subsp. mobilis (strain ATCC 31821 / ZM4 / CP4), this protein is D-alanine--D-alanine ligase.